A 49-amino-acid polypeptide reads, in one-letter code: Large ribosomal subunit protein eL40 (49 aa).

The protein belongs to the eukaryotic ribosomal protein eL40 family.

This Methanosarcina acetivorans (strain ATCC 35395 / DSM 2834 / JCM 12185 / C2A) protein is Large ribosomal subunit protein eL40.